The following is a 384-amino-acid chain: 8-amino-7-oxononanoate synthase (384 aa).

Arginine 21 is a substrate binding site. Pyridoxal 5'-phosphate is bound at residue 108–109; it reads GF. Histidine 133 is a substrate binding site. Positions 179, 207, and 233 each coordinate pyridoxal 5'-phosphate. Lysine 236 bears the N6-(pyridoxal phosphate)lysine mark. Threonine 352 is a binding site for substrate.

The protein belongs to the class-II pyridoxal-phosphate-dependent aminotransferase family. BioF subfamily. In terms of assembly, homodimer. Pyridoxal 5'-phosphate is required as a cofactor.

The enzyme catalyses 6-carboxyhexanoyl-[ACP] + L-alanine + H(+) = (8S)-8-amino-7-oxononanoate + holo-[ACP] + CO2. The protein operates within cofactor biosynthesis; biotin biosynthesis. Catalyzes the decarboxylative condensation of pimeloyl-[acyl-carrier protein] and L-alanine to produce 8-amino-7-oxononanoate (AON), [acyl-carrier protein], and carbon dioxide. This Escherichia coli O8 (strain IAI1) protein is 8-amino-7-oxononanoate synthase.